The sequence spans 237 residues: 2,3-bisphosphoglycerate-dependent phosphoglycerate mutase (237 aa).

Substrate contacts are provided by residues 10 to 17 (RHGESKWN), 23 to 24 (TG), Arg-62, 89 to 92 (ERHY), Lys-100, 116 to 117 (RR), and 185 to 186 (GN). The active-site Tele-phosphohistidine intermediate is His-11. Glu-89 (proton donor/acceptor) is an active-site residue.

This sequence belongs to the phosphoglycerate mutase family. BPG-dependent PGAM subfamily. In terms of assembly, homodimer.

The catalysed reaction is (2R)-2-phosphoglycerate = (2R)-3-phosphoglycerate. Its pathway is carbohydrate degradation; glycolysis; pyruvate from D-glyceraldehyde 3-phosphate: step 3/5. Functionally, catalyzes the interconversion of 2-phosphoglycerate and 3-phosphoglycerate. The sequence is that of 2,3-bisphosphoglycerate-dependent phosphoglycerate mutase from Baumannia cicadellinicola subsp. Homalodisca coagulata.